A 189-amino-acid chain; its full sequence is MKQFFEFIPLIIFFVVFKTTDIYIATGALIVSMGLMLAFNYYKDGKVEKMQVITFGMVLVFGTLTIVLHDDVFIKWKVTVVYALFSLALLVSQFFYKKPIIKQMLSKEINLPANIWNNLNMAWALLFAVLSAVNVYVAFSLSQETWVNFKVFGLLAITLAFTLLSGLYIYKYLPATAEKKISANKNPEE.

The next 5 membrane-spanning stretches (helical) occupy residues 4-24 (FFEF…DIYI), 53-73 (ITFG…DDVF), 76-96 (WKVT…QFFY), 121-141 (MAWA…AFSL), and 149-169 (FKVF…GLYI).

Belongs to the YciB family.

The protein resides in the cell inner membrane. Plays a role in cell envelope biogenesis, maintenance of cell envelope integrity and membrane homeostasis. The sequence is that of Inner membrane-spanning protein YciB from Psychromonas ingrahamii (strain DSM 17664 / CCUG 51855 / 37).